Consider the following 171-residue polypeptide: MKKNKSNLTPTTNYFDVFNTYKEKKASVDLITYEELMASVLFDNKLGFESEVYLDFVKKFTLAFEKKLDIWFENFIINFNLNLKFSTTIMIPILVTKANSTTDAINFRNDQNPVYNNFLISYNQKIKKLLLQNHPVQILPHLILFKSNLNGSLVLVFSEKIIASIEQKSGN.

This is an uncharacterized protein from Ureaplasma parvum serovar 3 (strain ATCC 700970).